A 563-amino-acid polypeptide reads, in one-letter code: Tripeptidyl-peptidase 1 (563 aa).

The signal sequence occupies residues 1 to 19 (MGLQACLLGLFALILSGKC). Residues 20–195 (SYSPEPDQRR…PEPQVTGTVG (176 aa)) constitute a propeptide, removed in mature form. Cys111 and Cys122 form a disulfide bridge. The Peptidase S53 domain occupies 199-563 (GVTPSVIRKR…PALLKTLLNP (365 aa)). N-linked (GlcNAc...) asparagine glycans are attached at residues Asn210 and Asn222. Residues Glu272 and Asp276 each act as charge relay system in the active site. Asn286, Asn313, and Asn443 each carry an N-linked (GlcNAc...) asparagine glycan. 2 disulfides stabilise this stretch: Cys365–Cys526 and Cys522–Cys537. Ser475 acts as the Charge relay system in catalysis. Ca(2+)-binding residues include Asp517 and Val518. The Ca(2+) site is built by Gly539, Gly541, and Asp543.

As to quaternary structure, monomer. Interacts with CLN5. Interacts with CLN3. It depends on Ca(2+) as a cofactor. Post-translationally, activated by autocatalytic proteolytical processing upon acidification. N-glycosylation is required for processing and activity.

It is found in the lysosome. Its subcellular location is the melanosome. The enzyme catalyses Release of an N-terminal tripeptide from a polypeptide, but also has endopeptidase activity.. Lysosomal serine protease with tripeptidyl-peptidase I activity. May act as a non-specific lysosomal peptidase which generates tripeptides from the breakdown products produced by lysosomal proteinases. Requires substrates with an unsubstituted N-terminus. This is Tripeptidyl-peptidase 1 (TPP1) from Macaca fascicularis (Crab-eating macaque).